Reading from the N-terminus, the 324-residue chain is tRNA dimethylallyltransferase (324 aa).

Residue 17 to 24 coordinates ATP; sequence GPTASGKT. Residue 19–24 participates in substrate binding; sequence TASGKT. Interaction with substrate tRNA regions lie at residues 42-45, 166-170, 251-256, and 284-291; these read DSAL, QRIQR, RCVGYR, and KRQITWLR.

This sequence belongs to the IPP transferase family. As to quaternary structure, monomer. The cofactor is Mg(2+).

It carries out the reaction adenosine(37) in tRNA + dimethylallyl diphosphate = N(6)-dimethylallyladenosine(37) in tRNA + diphosphate. In terms of biological role, catalyzes the transfer of a dimethylallyl group onto the adenine at position 37 in tRNAs that read codons beginning with uridine, leading to the formation of N6-(dimethylallyl)adenosine (i(6)A). This chain is tRNA dimethylallyltransferase, found in Burkholderia orbicola (strain MC0-3).